A 121-amino-acid chain; its full sequence is Large ribosomal subunit protein bL12 (121 aa).

This sequence belongs to the bacterial ribosomal protein bL12 family. In terms of assembly, homodimer. Part of the ribosomal stalk of the 50S ribosomal subunit. Forms a multimeric L10(L12)X complex, where L10 forms an elongated spine to which 2 to 4 L12 dimers bind in a sequential fashion. Binds GTP-bound translation factors.

Forms part of the ribosomal stalk which helps the ribosome interact with GTP-bound translation factors. Is thus essential for accurate translation. In Streptococcus equi subsp. equi (strain 4047), this protein is Large ribosomal subunit protein bL12.